Here is a 606-residue protein sequence, read N- to C-terminus: Limonene synthase, chloroplastic (606 aa).

Residues 1–38 constitute a chloroplast transit peptide; the sequence is MAIINLPVPTNSSSEVNKHNHLRSCLPSGRATFTTLSA. 5 residues coordinate (2E)-geranyl diphosphate: R320, D357, D361, R497, and D500. The Mg(2+) site is built by D357 and D361. The DDXXD motif signature appears at 357-361; sequence DDIYD. D500, T504, and E508 together coordinate Mg(2+).

It belongs to the terpene synthase family. Tpsb subfamily. In terms of assembly, monomer. It depends on Mg(2+) as a cofactor. Mn(2+) serves as cofactor. Confined to fruits.

Its subcellular location is the plastid. The protein localises to the chloroplast. It catalyses the reaction (2E,6E)-farnesyl diphosphate = (E)-beta-farnesene + diphosphate. The catalysed reaction is (2E)-geranyl diphosphate = limonene + diphosphate. The enzyme catalyses (2E)-geranyl diphosphate = beta-pinene + diphosphate. It carries out the reaction (2E)-geranyl diphosphate = sabinene + diphosphate. It catalyses the reaction (2E)-geranyl diphosphate = beta-myrcene + diphosphate. The catalysed reaction is (2E)-geranyl diphosphate = alpha-pinene + diphosphate. The enzyme catalyses (2E)-geranyl diphosphate = terpinolene + diphosphate. It functions in the pathway secondary metabolite biosynthesis; terpenoid biosynthesis. In terms of biological role, monoterpene synthase (mono-TPS) involved in the biosynthesis of monoterpenes natural products, constituent of coffee beverage aroma. Catalyzes the conversion of (2E)-geranyl diphosphate (GPP) into limonene, beta-pinene, sabinene and beta-myrcene, and, as minor products, alpha-pinene and alpha-terpinolene. Can also, with a low efficiency, use farnesyl pyrophosphate (FPP) as substrate to produce beta-farnesene. Not able to use geranylgeranyl pyrophosphate (GGPP) as substrate. In Coffea arabica (Arabian coffee), this protein is Limonene synthase, chloroplastic.